We begin with the raw amino-acid sequence, 689 residues long: DNA ligase (689 aa).

NAD(+) is bound by residues 40–44 (DAEYD), 89–90 (SL), and Glu-121. The active-site N6-AMP-lysine intermediate is the Lys-123. Residues Arg-144, Glu-179, Lys-295, and Lys-319 each coordinate NAD(+). Residues Cys-413, Cys-416, Cys-431, and Cys-437 each coordinate Zn(2+). In terms of domain architecture, BRCT spans 610–689 (RAQSSLTGKI…EEWLTLIKNA (80 aa)).

This sequence belongs to the NAD-dependent DNA ligase family. LigA subfamily. The cofactor is Mg(2+). Mn(2+) serves as cofactor.

It carries out the reaction NAD(+) + (deoxyribonucleotide)n-3'-hydroxyl + 5'-phospho-(deoxyribonucleotide)m = (deoxyribonucleotide)n+m + AMP + beta-nicotinamide D-nucleotide.. In terms of biological role, DNA ligase that catalyzes the formation of phosphodiester linkages between 5'-phosphoryl and 3'-hydroxyl groups in double-stranded DNA using NAD as a coenzyme and as the energy source for the reaction. It is essential for DNA replication and repair of damaged DNA. The polypeptide is DNA ligase (Rickettsia akari (strain Hartford)).